Consider the following 189-residue polypeptide: uncharacterized protein (189 aa).

Positions 9–69 constitute an HTH tetR-type domain; it reads ADTGGRILRA…SMLTSHIAAV (61 aa). Positions 32 to 51 form a DNA-binding region, H-T-H motif; it reads TLAEIARRAGVSRPTVYRRW.

This is an uncharacterized protein from Mycobacterium bovis (strain ATCC BAA-935 / AF2122/97).